Consider the following 445-residue polypeptide: Exodeoxyribonuclease 7 large subunit (445 aa).

The protein belongs to the XseA family. Heterooligomer composed of large and small subunits.

The protein localises to the cytoplasm. The catalysed reaction is Exonucleolytic cleavage in either 5'- to 3'- or 3'- to 5'-direction to yield nucleoside 5'-phosphates.. In terms of biological role, bidirectionally degrades single-stranded DNA into large acid-insoluble oligonucleotides, which are then degraded further into small acid-soluble oligonucleotides. The chain is Exodeoxyribonuclease 7 large subunit from Staphylococcus epidermidis (strain ATCC 12228 / FDA PCI 1200).